The following is a 114-amino-acid chain: Large ribosomal subunit protein uL22 (114 aa).

This sequence belongs to the universal ribosomal protein uL22 family. In terms of assembly, part of the 50S ribosomal subunit.

In terms of biological role, this protein binds specifically to 23S rRNA; its binding is stimulated by other ribosomal proteins, e.g. L4, L17, and L20. It is important during the early stages of 50S assembly. It makes multiple contacts with different domains of the 23S rRNA in the assembled 50S subunit and ribosome. Functionally, the globular domain of the protein is located near the polypeptide exit tunnel on the outside of the subunit, while an extended beta-hairpin is found that lines the wall of the exit tunnel in the center of the 70S ribosome. The polypeptide is Large ribosomal subunit protein uL22 (Ehrlichia canis (strain Jake)).